The primary structure comprises 828 residues: Glycerol-3-phosphate acyltransferase (828 aa).

Positions 309 to 314 (CHRSHI) match the HXXXXD motif motif.

This sequence belongs to the GPAT/DAPAT family.

The protein resides in the cell inner membrane. The catalysed reaction is sn-glycerol 3-phosphate + an acyl-CoA = a 1-acyl-sn-glycero-3-phosphate + CoA. Its pathway is phospholipid metabolism; CDP-diacylglycerol biosynthesis; CDP-diacylglycerol from sn-glycerol 3-phosphate: step 1/3. The sequence is that of Glycerol-3-phosphate acyltransferase from Pseudomonas putida (strain GB-1).